The chain runs to 88 residues: C-C motif chemokine 18 (88 aa).

Positions 1-19 (MKGLAAALLVLCTVALCSC) are cleaved as a signal peptide. 2 disulfide bridges follow: C29–C53 and C30–C69.

This sequence belongs to the intercrine beta (chemokine CC) family. In terms of processing, the Cys-29/Cys-53 disulfide bond is required for activity.

Its subcellular location is the secreted. Chemotactic factor that attracts lymphocytes but not monocytes or granulocytes. May be involved in B-cell migration into B-cell follicles in lymph nodes. Attracts naive T-lymphocytes toward dendritic cells and activated macrophages in lymph nodes, has chemotactic activity for naive T-cells, CD4+ and CD8+ T-cells and thus may play a role in both humoral and cell-mediated immunity responses. The sequence is that of C-C motif chemokine 18 (CCL18) from Macaca mulatta (Rhesus macaque).